The following is a 157-amino-acid chain: UPF0212 protein rrnAC1165 (157 aa).

Positions 105–157 (VLEIEEIPEESDETTEDESSSAESEADADDPPSDQSADESDDVLPEFEELIDE) are disordered. Residues 106 to 157 (LEIEEIPEESDETTEDESSSAESEADADDPPSDQSADESDDVLPEFEELIDE) show a composition bias toward acidic residues.

This sequence belongs to the UPF0212 family.

The polypeptide is UPF0212 protein rrnAC1165 (Haloarcula marismortui (strain ATCC 43049 / DSM 3752 / JCM 8966 / VKM B-1809) (Halobacterium marismortui)).